Consider the following 1295-residue polypeptide: DNA-directed RNA polymerase subunit beta' (1295 aa).

The Zn(2+) site is built by C60, C62, C75, and C78. Mg(2+) contacts are provided by D516, D518, and D520. 4 residues coordinate Zn(2+): C841, C914, C921, and C924.

The protein belongs to the RNA polymerase beta' chain family. The RNAP catalytic core consists of 2 alpha, 1 beta, 1 beta' and 1 omega subunit. When a sigma factor is associated with the core the holoenzyme is formed, which can initiate transcription. Mg(2+) is required as a cofactor. It depends on Zn(2+) as a cofactor.

The enzyme catalyses RNA(n) + a ribonucleoside 5'-triphosphate = RNA(n+1) + diphosphate. In terms of biological role, DNA-dependent RNA polymerase catalyzes the transcription of DNA into RNA using the four ribonucleoside triphosphates as substrates. The protein is DNA-directed RNA polymerase subunit beta' of Dehalococcoides mccartyi (strain ATCC BAA-2266 / KCTC 15142 / 195) (Dehalococcoides ethenogenes (strain 195)).